A 397-amino-acid chain; its full sequence is CCA-adding enzyme (397 aa).

Glycine 32 and arginine 35 together coordinate ATP. Residues glycine 32 and arginine 35 each contribute to the CTP site. 2 residues coordinate Mg(2+): aspartate 45 and aspartate 47. Arginine 116, aspartate 159, arginine 162, arginine 165, and arginine 168 together coordinate ATP. CTP is bound by residues arginine 116, aspartate 159, arginine 162, arginine 165, and arginine 168.

This sequence belongs to the tRNA nucleotidyltransferase/poly(A) polymerase family. Bacterial CCA-adding enzyme type 3 subfamily. In terms of assembly, homodimer. Requires Mg(2+) as cofactor.

The enzyme catalyses a tRNA precursor + 2 CTP + ATP = a tRNA with a 3' CCA end + 3 diphosphate. The catalysed reaction is a tRNA with a 3' CCA end + 2 CTP + ATP = a tRNA with a 3' CCACCA end + 3 diphosphate. Catalyzes the addition and repair of the essential 3'-terminal CCA sequence in tRNAs without using a nucleic acid template. Adds these three nucleotides in the order of C, C, and A to the tRNA nucleotide-73, using CTP and ATP as substrates and producing inorganic pyrophosphate. tRNA 3'-terminal CCA addition is required both for tRNA processing and repair. Also involved in tRNA surveillance by mediating tandem CCA addition to generate a CCACCA at the 3' terminus of unstable tRNAs. While stable tRNAs receive only 3'-terminal CCA, unstable tRNAs are marked with CCACCA and rapidly degraded. This is CCA-adding enzyme from Latilactobacillus sakei subsp. sakei (strain 23K) (Lactobacillus sakei subsp. sakei).